The sequence spans 327 residues: Putative ABC transporter ATP-binding protein MM_0887 (327 aa).

Residues 1-44 form a disordered region; the sequence is MSKSTPLKSSIIRADLPEQAEGRTGPETGKDPEKTGNSEGKTDT. A compositionally biased stretch (basic and acidic residues) spans 28-44; sequence TGKDPEKTGNSEGKTDT. The 236-residue stretch at 47–282 folds into the ABC transporter domain; sequence IEIKDLCHRY…PALLRKAHLR (236 aa). 81 to 88 contributes to the ATP binding site; sequence GANGAGKS.

This sequence belongs to the ABC transporter superfamily.

It is found in the cell membrane. Functionally, probably part of an ABC transporter complex. Responsible for energy coupling to the transport system. This chain is Putative ABC transporter ATP-binding protein MM_0887, found in Methanosarcina mazei (strain ATCC BAA-159 / DSM 3647 / Goe1 / Go1 / JCM 11833 / OCM 88) (Methanosarcina frisia).